Consider the following 520-residue polypeptide: tRNA-2-methylthio-N(6)-dimethylallyladenosine synthase (520 aa).

The MTTase N-terminal domain occupies 77–195 (KKFLIRTYGC…LPHLLRDAIF (119 aa)). Cysteine 86, cysteine 122, cysteine 156, cysteine 232, cysteine 236, and cysteine 239 together coordinate [4Fe-4S] cluster. One can recognise a Radical SAM core domain in the interval 218–448 (RKNKTQAWVN…ALVNDISNKR (231 aa)). The 64-residue stretch at 450–513 (LDYQDKIVEV…TWSLDGEIVS (64 aa)) folds into the TRAM domain.

The protein belongs to the methylthiotransferase family. MiaB subfamily. Monomer. The cofactor is [4Fe-4S] cluster.

Its subcellular location is the cytoplasm. It carries out the reaction N(6)-dimethylallyladenosine(37) in tRNA + (sulfur carrier)-SH + AH2 + 2 S-adenosyl-L-methionine = 2-methylsulfanyl-N(6)-dimethylallyladenosine(37) in tRNA + (sulfur carrier)-H + 5'-deoxyadenosine + L-methionine + A + S-adenosyl-L-homocysteine + 2 H(+). Its function is as follows. Catalyzes the methylthiolation of N6-(dimethylallyl)adenosine (i(6)A), leading to the formation of 2-methylthio-N6-(dimethylallyl)adenosine (ms(2)i(6)A) at position 37 in tRNAs that read codons beginning with uridine. This is tRNA-2-methylthio-N(6)-dimethylallyladenosine synthase from Shouchella clausii (strain KSM-K16) (Alkalihalobacillus clausii).